A 134-amino-acid polypeptide reads, in one-letter code: MDTSHTTKSCLLILLVALLCAERAQGLECYQCYGVPFETSCPSITCPYPDGVCVTQEAAVIVDSQTRKVKNNLCLPICPPNIESMEILGTKVNVKTSCCQEDLCNVAVPNGGSTWTMAGVLLFSLSSVLLQTLL.

The signal sequence occupies residues 1–26 (MDTSHTTKSCLLILLVALLCAERAQG). Positions 27-119 (LECYQCYGVP…NGGSTWTMAG (93 aa)) constitute a UPAR/Ly6 domain. Intrachain disulfides connect Cys29/Cys53, Cys32/Cys41, Cys46/Cys74, Cys78/Cys98, and Cys99/Cys104. Residue Gly112 is the site of GPI-anchor amidated glycine attachment. A propeptide spans 113–134 (STWTMAGVLLFSLSSVLLQTLL) (removed in mature form).

Post-translationally, O-glycosylated. Not N-glycosylated. In terms of processing, not phosphorylated. Widely expressed.

It is found in the cell membrane. Functionally, T-cell activation. This is Lymphocyte antigen 6A-2/6E-1 (Ly6a) from Mus musculus (Mouse).